The sequence spans 671 residues: Probable potassium transport system protein Kup 2 (671 aa).

12 consecutive transmembrane segments (helical) span residues 18–38, 60–80, 103–123, 146–166, 173–193, 218–238, 252–272, 292–312, 343–363, 373–393, 402–422, and 424–444; these read GFLI…LYAM, VSLV…LIAL, WLII…ALTP, AVMV…RFGA, FGPI…INSF, AGFF…ALYS, WPFV…WLLA, MVIY…QALI, LYIP…VLYF, YSLA…YFLI, IAII…ASLV, and FING…VMFI.

It belongs to the HAK/KUP transporter (TC 2.A.72) family.

The protein resides in the cell membrane. It catalyses the reaction K(+)(in) + H(+)(in) = K(+)(out) + H(+)(out). In terms of biological role, transport of potassium into the cell. Likely operates as a K(+):H(+) symporter. This chain is Probable potassium transport system protein Kup 2, found in Lactococcus lactis subsp. lactis (strain IL1403) (Streptococcus lactis).